A 482-amino-acid chain; its full sequence is Histone deacetylase 1 (482 aa).

The segment at 9-321 is histone deacetylase; sequence RKVCYYYDGD…WTYETAVALD (313 aa). The 1D-myo-inositol 1,4,5,6-tetrakisphosphate site is built by Gly-27 and Lys-31. N6-acetyllysine; alternate is present on Lys-74. Residue Lys-74 forms a Glycyl lysine isopeptide (Lys-Gly) (interchain with G-Cter in SUMO2); alternate linkage. His-141 is an active-site residue. The Zn(2+) site is built by Asp-176 and His-178. Lys-220 carries the N6-acetyllysine modification. Residue Cys-261 is modified to S-nitrosocysteine. Asp-264 contacts Zn(2+). Arg-270 is a 1D-myo-inositol 1,4,5,6-tetrakisphosphate binding site. Cys-273 carries the post-translational modification S-nitrosocysteine. The segment covering 390–400 has biased composition (acidic residues); that stretch reads PEESGDEDEED. Positions 390–482 are disordered; that stretch reads PEESGDEDEE…KGVKEEVKMA (93 aa). Residues Ser-393, Ser-406, Ser-409, Ser-421, and Ser-423 each carry the phosphoserine modification. Residues 401–416 show a composition bias toward basic and acidic residues; sequence PDKRISICSSDKRIAC. A compositionally biased stretch (acidic residues) spans 417–427; that stretch reads EEEFSDSDEEG. At Lys-432 the chain carries N6-methylated lysine; by EHMT2. Residue Lys-438 forms a Glycyl lysine isopeptide (Lys-Gly) (interchain with G-Cter in SUMO2) linkage. Positions 443 to 482 are enriched in basic and acidic residues; it reads VKTEDEKEKDPEEKKEVTEEEKTKEEKPEAKGVKEEVKMA. Residue Lys-444 forms a Glycyl lysine isopeptide (Lys-Gly) (interchain with G-Cter in SUMO2); alternate linkage. Lys-444 is covalently cross-linked (Glycyl lysine isopeptide (Lys-Gly) (interchain with G-Cter in SUMO); alternate). Residues Lys-456, Lys-457, and Lys-473 each participate in a glycyl lysine isopeptide (Lys-Gly) (interchain with G-Cter in SUMO2) cross-link. Lys-476 is covalently cross-linked (Glycyl lysine isopeptide (Lys-Gly) (interchain with G-Cter in SUMO2); alternate). Lys-476 participates in a covalent cross-link: Glycyl lysine isopeptide (Lys-Gly) (interchain with G-Cter in SUMO); alternate. Lys-480 participates in a covalent cross-link: Glycyl lysine isopeptide (Lys-Gly) (interchain with G-Cter in SUMO2).

The protein belongs to the histone deacetylase family. HD type 1 subfamily. As to quaternary structure, part of the core histone deacetylase (HDAC) complex composed of HDAC1, HDAC2, RBBP4 and RBBP7, the core complex associates with SIN3, SAP18 and SAP30 to form the SIN3 HDAC complex. Component of the nucleosome remodeling and deacetylase (NuRD) repressor complex, composed of core proteins MTA1, MTA2, MTA3, RBBP4, RBBP7, HDAC1, HDAC2, MBD2, MBD3, and peripherally associated proteins CDK2AP1, CDK2AP2, GATAD2A, GATAD2B, CHD3, CHD4 and CHD5. The exact stoichiometry of the NuRD complex is unknown, and some subunits such as MBD2 and MBD3, GATAD2A and GATAD2B, and CHD3, CHD4 and CHD5 define mutually exclusive NuRD complexes. Component of a BHC histone deacetylase complex that contains HDAC1, HDAC2, HMG20B/BRAF35, KDM1A, RCOR1/CoREST and PHF21A/BHC80. The BHC complex may also contain ZMYM2, ZNF217, ZMYM3, GSE1 and GTF2I. Component of a mSin3A corepressor complex that contains SIN3A, SAP130, SUDS3/SAP45, ARID4B/SAP180, HDAC1 and HDAC2. Found in a trimeric complex with APBB1 and TSHZ3; the interaction between HDAC1 and APBB1 is mediated by TSHZ3. Forms a complex comprising APPL1, RUVBL2, APPL2, CTNNB1 and HDAC2. Component of a RCOR/GFI/KDM1A/HDAC complex. Part of a complex composed of TRIM28, HDAC1, HDAC2 and EHMT2. Part of a complex containing at least CDYL, MIER1, MIER2, HDAC1 and HDAC2. The large PER complex involved in the histone deacetylation is composed of at least HDAC1, PER2, SFPQ and SIN3A. Associates with the 9-1-1 complex; interacts with HUS1. Found in a complex with DNMT3A and HDAC7. Found in a complex with YY1, SIN3A and GON4L. Identified in a histone deacetylase complex that contains DNTTIP1, HDAC1 and MIDEAS; this complex assembles into a tetramer that contains four copies of each protein chain. Found in a complex composed of at least SINHCAF, SIN3A, HDAC1, SAP30, RBBP4, OGT and TET1. Component of the SIN3B complex, which includes SIN3B, HDAC1, PHF12 and MORF4L1. Interacts with GFI1; the interaction is direct. Interacts directly with GFI1B. Interacts with TSHZ3 (via N-terminus); the interaction is direct. Interacts with APEX1; the interaction is not dependent on the acetylated status of APEX1. Interacts with BANP. Interacts with BAZ2A/TIP5. Interacts with BCL6. Interacts with BCOR. Interacts with BHLHE40/DEC1. Interacts with BRCC3; this interaction is enhanced in the presence of PWWP2B. Interacts with BRMS1. Interacts with BRMS1L. Interacts with C10orf90/FATS (via its N-terminal); the interaction prevents binding of HDAC1 to CDKN1A/p21 and facilitates the acetylation and stabilization of CDKN1A/p21. Interacts with CBFA2T3. Interacts with CCAR2. Interacts with CDK2AP1. Interacts with CHD3. Interacts with CHD4. Interacts with CHFR. Interacts with CIART. Interacts with CDKN1A/p21. Interacts with CDK5 complexed to CDK5R1 (p25). Interacts with CRY1. Interacts with DAXX. Interacts with DDIT3/CHOP. Interacts with DDX5. Interacts with DHX36; this interaction occurs in a RNA-dependent manner. Interacts with DNMT1. Interacts with DNTTIP1. Interacts with E4F1. Interacts with EP300. Interacts with ERCC6. Interacts with GATAD2A. Interacts with HCFC1. Interacts with HDAC9. Interacts with HUS1. Interacts with INSM1. Interacts with KDM4A. Interacts with KDM5A; this interaction impairs histone deacetylation. Interacts with KDM5B. Interacts with KLF1. Interacts with MBD3L2. Interacts with MIER1. Interacts with NFE4. Interacts with NR4A2/NURR1. Interacts with NR1D2 (via C-terminus). Interacts with NRIP1. Interacts with NSD2. Interacts with PACS2. Interacts with PHB2. Interacts with PPHLN1. Interacts with PRDM6. Interacts with PRDM16. Interacts with PWWP2A in a MTA1-dependent manner. Interacts with PWWP2B. Interacts with RB1. Interacts with RERE. Interacts with SANBR (via the BTB domain). Interacts with SAMSN1. Interacts with SAP30L. Interacts with SETDB1. Interacts with SIN3A. Interacts with SMAD3. Interacts with SMAD4; positively regulated by ZBTB7A. Interacts with SMARCAD1. Interacts with SMARCA4/BRG1. Interacts with SMYD2. Interacts with SMYD4 (via MYND-type zinc finger). Interacts with SP1; the interaction deacetylates SP1 and regulates its transcriptional activity. Interacts with SP3; the interaction deacetylates SP3 and regulates its transcriptional activity. In vitro, C(18) ceramides increase this interaction and the subsequent SP3 deacetylation and SP3-mediated repression of the TERT promoter. Interacts with SPEN/MINT. Interacts with SPHK2. Interacts with SUV39H1. Interacts with TGIF. Interacts with TGIF2. Interacts with TRAF6. Interacts with TRIM28; the interaction recruits HDAC1 to E2F1 and inhibits its acetylation. Interacts with TSC22D3 isoform 1; this interaction affects HDAC1 activity on MYOG promoter and thus inhibits MYOD1 transcriptional activity. Interacts with UHRF1. Interacts with UHRF2. Interacts with ZBTB7A. Interacts with ZMYND8. Interacts with ZMYND15. Interacts with ZNF431. Interacts with ZNF516; this interaction is enhanced in the presence of PWWP2B. Interacts with ZNF541. Interacts with ZNF638. Interacts with ZNHIT1. Interacts with the non-histone region of MACROH2A1. Identified in a complex with HDAC2, KCTD19, DNTTIP1 and ZNF541. Interacts with MSX3. Interacts with VRK1. Zn(2+) is required as a cofactor. Sumoylated on Lys-444 and Lys-476; which promotes enzymatic activity. Desumoylated by SENP1. In terms of processing, phosphorylation on Ser-421 and Ser-423 promotes enzymatic activity and interactions with NuRD and SIN3 complexes. Phosphorylated by CDK5. Post-translationally, ubiquitinated by CHFR and KCTD11, leading to its degradation by the proteasome.

It is found in the nucleus. The catalysed reaction is N(6)-acetyl-L-lysyl-[histone] + H2O = L-lysyl-[histone] + acetate. It carries out the reaction N(6)-acetyl-L-lysyl-[protein] + H2O = L-lysyl-[protein] + acetate. It catalyses the reaction N(6)-(2E)-butenoyl-L-lysyl-[protein] + H2O = (2E)-2-butenoate + L-lysyl-[protein]. The enzyme catalyses N(6)-[(S)-lactoyl]-L-lysyl-[protein] + H2O = (S)-lactate + L-lysyl-[protein]. With respect to regulation, inositol tetraphosphate (1D-myo-inositol 1,4,5,6-tetrakisphosphate) may act as an intermolecular glue between HDAC1 and N-Cor repressor complex components. In terms of biological role, histone deacetylase that catalyzes the deacetylation of lysine residues on the N-terminal part of the core histones (H2A, H2B, H3 and H4). Histone deacetylation gives a tag for epigenetic repression and plays an important role in transcriptional regulation, cell cycle progression and developmental events. Histone deacetylases act via the formation of large multiprotein complexes. Acts as a component of the histone deacetylase NuRD complex which participates in the remodeling of chromatin. As part of the SIN3B complex is recruited downstream of the constitutively active genes transcriptional start sites through interaction with histones and mitigates histone acetylation and RNA polymerase II progression within transcribed regions contributing to the regulation of transcription. Also functions as a deacetylase for non-histone targets, such as NR1D2, RELA, SP1, SP3, STAT3 and TSHZ3. Deacetylates SP proteins, SP1 and SP3, and regulates their function. Component of the BRG1-RB1-HDAC1 complex, which negatively regulates the CREST-mediated transcription in resting neurons. Upon calcium stimulation, HDAC1 is released from the complex and CREBBP is recruited, which facilitates transcriptional activation. Deacetylates TSHZ3 and regulates its transcriptional repressor activity. Deacetylates 'Lys-310' in RELA and thereby inhibits the transcriptional activity of NF-kappa-B. Deacetylates NR1D2 and abrogates the effect of KAT5-mediated relieving of NR1D2 transcription repression activity. Component of a RCOR/GFI/KDM1A/HDAC complex that suppresses, via histone deacetylase (HDAC) recruitment, a number of genes implicated in multilineage blood cell development. Involved in CIART-mediated transcriptional repression of the circadian transcriptional activator: CLOCK-BMAL1 heterodimer. Required for the transcriptional repression of circadian target genes, such as PER1, mediated by the large PER complex or CRY1 through histone deacetylation. In addition to protein deacetylase activity, also has protein-lysine deacylase activity: acts as a protein decrotonylase and delactylase by mediating decrotonylation ((2E)-butenoyl) and delactylation (lactoyl) of histones, respectively. This is Histone deacetylase 1 (Hdac1) from Rattus norvegicus (Rat).